The chain runs to 867 residues: G-protein coupled receptor family C group 6 member A (867 aa).

The N-terminal stretch at 1–19 is a signal peptide; the sequence is MDLMSFILLWAGLMKVAEA. The Extracellular portion of the chain corresponds to 20-566; sequence SIAQFSQLGA…EYFDWNSGFA (547 aa). 10 N-linked (GlcNAc...) asparagine glycosylation sites follow: asparagine 51, asparagine 55, asparagine 97, asparagine 296, asparagine 308, asparagine 336, asparagine 356, asparagine 370, asparagine 527, and asparagine 547. Residues 567-587 traverse the membrane as a helical segment; the sequence is IVLLILAALGVLLLFFMSALF. Over 588–602 the chain is Cytoplasmic; it reads FWQRHSPVVKAAGGP. The chain crosses the membrane as a helical span at residues 603–623; it reads LCHLILVSLLGSFISVVFFVG. The Extracellular portion of the chain corresponds to 624-634; the sequence is EPSDLTCRARQ. A helical transmembrane segment spans residues 635–655; sequence VIFGFSFTLCVSCILVKSLKI. Topologically, residues 656-675 are cytoplasmic; the sequence is LLAFEMNFELKELLCMLYKP. A helical transmembrane segment spans residues 676-696; the sequence is YMIVSVGMGVQIIICTVWLTL. Residues 697–716 are Extracellular-facing; it reads YKPFKDKEVQTESILLECNE. Residues 717–737 traverse the membrane as a helical segment; that stretch reads GFYVMFWLMLGYIALLALFCF. The Cytoplasmic portion of the chain corresponds to 738–754; sequence TFAYIGRKLPQKYNEAK. The chain crosses the membrane as a helical span at residues 755–775; sequence FITFSMVICLMAWIIFIPIHV. At 776-781 the chain is on the extracellular side; the sequence is TTSGKY. Residues 782–802 traverse the membrane as a helical segment; that stretch reads VPAVEMVVILISNYGILSCHF. Residues 803–867 are Cytoplasmic-facing; the sequence is LPKSYIILFK…LSFVPEEKHE (65 aa).

The protein belongs to the G-protein coupled receptor 3 family. Homodimer; disulfide-linked.

It is found in the cell membrane. Its function is as follows. Olfactory receptor that is activated by amino acids that act as potent odorants in fish. Displays preference for acidic amino acids such as Glu over basic amino acids. This chain is G-protein coupled receptor family C group 6 member A (gprc6a), found in Danio rerio (Zebrafish).